Reading from the N-terminus, the 48-residue chain is Bacteriochlorophyll c-binding protein (48 aa).

Histidine 25 contacts a bacteriochlorophyll c.

This sequence belongs to the BChl C/E-binding protein family.

The protein localises to the chlorosome. It is found in the chlorosome envelope. Component of the photosynthetic apparatus. The light harvesting B740 complex binds bacteriochlorophyll c. The polypeptide is Bacteriochlorophyll c-binding protein (csmA) (Chlorobaculum thiosulfatiphilum (Chlorobium limicola f.sp. thiosulfatophilum)).